We begin with the raw amino-acid sequence, 513 residues long: Exoglucanase 1 (513 aa).

Residues 1 to 17 form the signal peptide; the sequence is MYRKLAVISAFLATARA. Pyrrolidone carboxylic acid is present on glutamine 18. Positions 18–453 are catalytic; sequence QSACTLQSET…GSTGNPSGGN (436 aa). 10 disulfides stabilise this stretch: cysteine 21–cysteine 89, cysteine 36–cysteine 42, cysteine 67–cysteine 88, cysteine 78–cysteine 84, cysteine 155–cysteine 414, cysteine 189–cysteine 227, cysteine 193–cysteine 226, cysteine 247–cysteine 273, cysteine 255–cysteine 260, and cysteine 278–cysteine 348. Asparagine 62 carries N-linked (GlcNAc) asparagine glycosylation. The active-site Nucleophile is the glutamate 229. Residue glutamate 234 is the Proton donor/acceptor of the active site. N-linked (GlcNAc) asparagine glycosylation is found at asparagine 287 and asparagine 401. The span at 401–437 shows a compositional bias: polar residues; sequence NETSSTPGAVRGSCSTSSGVPAQVESQSPNAKVTFSN. Positions 401–480 are disordered; it reads NETSSTPGAV…TGSSPGPTQS (80 aa). The segment covering 449-459 has biased composition (gly residues); sequence PSGGNPPGGNR. The segment at 454-477 is linker; it reads PPGGNRGTTTTRRPATTTGSSPGP. Residues 460–478 are compositionally biased toward low complexity; it reads GTTTTRRPATTTGSSPGPT. An O-linked (Man) threonine glycan is attached at threonine 461. 3 O-linked (Man...) threonine glycosylation sites follow: threonine 462, threonine 463, and threonine 464. Threonine 469 carries an O-linked (Man) threonine glycan. Threonine 470 and threonine 471 each carry an O-linked (Man...) threonine glycan. O-linked (Man) serine glycans are attached at residues serine 473 and serine 474. Residues 477–513 enclose the CBM1 domain; it reads PTQSHYGQCGGIGYSGPTVCASGTTCQVLNPYYSQCL. O-linked (Man) threonine glycosylation occurs at threonine 478. Serine 480 and serine 491 each carry an O-linked (Man) serine glycan. 2 disulfides stabilise this stretch: cysteine 485–cysteine 502 and cysteine 496–cysteine 512.

This sequence belongs to the glycosyl hydrolase 7 (cellulase C) family. Post-translationally, N-glycosylated. The catalytic core domain comprises three N-linked glycans which each consist of a single N-acetylglucosamine residue. In terms of processing, O-glycosylated. Within the linker domain, all 8 threonines are variably glycosylated with between at least one, and up to three, mannose residues per site. All serines in this domain are at least partially glycosylated with a single mannose residue. O-glycosylation of the cellulase linker provides protection from proteolysis. Linker glycans also contribute to binding affinity of cellobiohydrolases to cellulose.

It localises to the secreted. It carries out the reaction Hydrolysis of (1-&gt;4)-beta-D-glucosidic linkages in cellulose and cellotetraose, releasing cellobiose from the non-reducing ends of the chains.. In terms of biological role, exocellobiohydrolases (CBH) that catalyzes the hydrolysis of 1,4-beta-D-glucosidic bonds in cellulose to release the disaccharide cellobiose. The degradation of cellulose involves an interplay between different cellulolytic enzymes. Hydrolysis starts with endoglucanases (EGs), which cut internal beta-1,4-glucosidic bonds in cellulose to reduce the polymerization degree of the substrate and create new chain ends for exocellobiohydrolases (CBHs). The CBHs release the disaccharide cellobiose from the non-reducing end of the cellulose polymer chain. Finally, beta-1,4-glucosidases hydrolyze the cellobiose and other short cello-oligosaccharides into glucose units. In Hypocrea jecorina (Trichoderma reesei), this protein is Exoglucanase 1 (cbh1).